Reading from the N-terminus, the 488-residue chain is Multidrug resistance outer membrane protein MdtP (488 aa).

Residues 1-23 (MINRQLSRLLLCSILGSTTLISG) form the signal peptide. Cysteine 24 carries N-palmitoyl cysteine lipidation. Cysteine 24 carries the S-diacylglycerol cysteine lipid modification.

It belongs to the outer membrane factor (OMF) (TC 1.B.17) family. Could be part of a tripartite efflux system composed of MdtN, MdtO and MdtP.

Its subcellular location is the cell outer membrane. Functionally, could be involved in resistance to puromycin, acriflavine and tetraphenylarsonium chloride. In Shigella flexneri, this protein is Multidrug resistance outer membrane protein MdtP (mdtP).